We begin with the raw amino-acid sequence, 195 residues long: Imidazoleglycerol-phosphate dehydratase (195 aa).

It belongs to the imidazoleglycerol-phosphate dehydratase family.

Its subcellular location is the cytoplasm. The enzyme catalyses D-erythro-1-(imidazol-4-yl)glycerol 3-phosphate = 3-(imidazol-4-yl)-2-oxopropyl phosphate + H2O. The protein operates within amino-acid biosynthesis; L-histidine biosynthesis; L-histidine from 5-phospho-alpha-D-ribose 1-diphosphate: step 6/9. The protein is Imidazoleglycerol-phosphate dehydratase of Thermotoga neapolitana (strain ATCC 49049 / DSM 4359 / NBRC 107923 / NS-E).